A 246-amino-acid chain; its full sequence is NAD(P)H-hydrate epimerase (246 aa).

Residues 12-234 form the YjeF N-terminal domain; that stretch reads AAEIDKELMG…DFANKFGFEP (223 aa). (6S)-NADPHX is bound at residue 69–73; the sequence is NNGGD. K(+) is bound by residues Asn-70 and Asp-138. (6S)-NADPHX is bound by residues 142 to 148 and Asp-173; that span reads GFSFKPP. Thr-176 contributes to the K(+) binding site.

The protein belongs to the NnrE/AIBP family. The cofactor is K(+).

The protein localises to the cytoplasm. It is found in the mitochondrion. It catalyses the reaction (6R)-NADHX = (6S)-NADHX. It carries out the reaction (6R)-NADPHX = (6S)-NADPHX. Functionally, catalyzes the epimerization of the S- and R-forms of NAD(P)HX, a damaged form of NAD(P)H that is a result of enzymatic or heat-dependent hydration. This is a prerequisite for the S-specific NAD(P)H-hydrate dehydratase to allow the repair of both epimers of NAD(P)HX. This Saccharomyces cerevisiae (strain ATCC 204508 / S288c) (Baker's yeast) protein is NAD(P)H-hydrate epimerase.